The sequence spans 94 residues: Pyrimidine/purine nucleoside phosphorylase (94 aa).

This sequence belongs to the nucleoside phosphorylase PpnP family.

It carries out the reaction a purine D-ribonucleoside + phosphate = a purine nucleobase + alpha-D-ribose 1-phosphate. The catalysed reaction is adenosine + phosphate = alpha-D-ribose 1-phosphate + adenine. It catalyses the reaction cytidine + phosphate = cytosine + alpha-D-ribose 1-phosphate. The enzyme catalyses guanosine + phosphate = alpha-D-ribose 1-phosphate + guanine. It carries out the reaction inosine + phosphate = alpha-D-ribose 1-phosphate + hypoxanthine. The catalysed reaction is thymidine + phosphate = 2-deoxy-alpha-D-ribose 1-phosphate + thymine. It catalyses the reaction uridine + phosphate = alpha-D-ribose 1-phosphate + uracil. The enzyme catalyses xanthosine + phosphate = alpha-D-ribose 1-phosphate + xanthine. Catalyzes the phosphorolysis of diverse nucleosides, yielding D-ribose 1-phosphate and the respective free bases. Can use uridine, adenosine, guanosine, cytidine, thymidine, inosine and xanthosine as substrates. Also catalyzes the reverse reactions. The protein is Pyrimidine/purine nucleoside phosphorylase of Salmonella typhimurium (strain LT2 / SGSC1412 / ATCC 700720).